The sequence spans 340 residues: Anthranilate phosphoribosyltransferase (340 aa).

5-phospho-alpha-D-ribose 1-diphosphate is bound by residues Gly-81, 84–85, Thr-89, 91–94, 109–117, and Ala-121; these read GD, NIST, and KHGNRNLSS. Residue Gly-81 participates in anthranilate binding. Mg(2+) is bound at residue Ser-93. Asn-112 lines the anthranilate pocket. Arg-167 is an anthranilate binding site. Asp-226 and Glu-227 together coordinate Mg(2+).

The protein belongs to the anthranilate phosphoribosyltransferase family. Homodimer. It depends on Mg(2+) as a cofactor.

The enzyme catalyses N-(5-phospho-beta-D-ribosyl)anthranilate + diphosphate = 5-phospho-alpha-D-ribose 1-diphosphate + anthranilate. It functions in the pathway amino-acid biosynthesis; L-tryptophan biosynthesis; L-tryptophan from chorismate: step 2/5. Catalyzes the transfer of the phosphoribosyl group of 5-phosphorylribose-1-pyrophosphate (PRPP) to anthranilate to yield N-(5'-phosphoribosyl)-anthranilate (PRA). The polypeptide is Anthranilate phosphoribosyltransferase (Ruegeria sp. (strain TM1040) (Silicibacter sp.)).